A 392-amino-acid polypeptide reads, in one-letter code: Protein-glutamate methylesterase/protein-glutamine glutaminase (392 aa).

The 118-residue stretch at 9 to 126 (TVLIVDDSPF…GADIQALARD (118 aa)) folds into the Response regulatory domain. 4-aspartylphosphate is present on Asp-60. Positions 148–194 (VSRISSASGSRPPWTAGAASENTNRLSSPGSTSSTLGSAKGRSLDSG) are disordered. Residues 173–185 (LSSPGSTSSTLGS) are compositionally biased toward low complexity. In terms of domain architecture, CheB-type methylesterase spans 198–392 (PKYPVEIVAI…RHIVECVQRR (195 aa)). Catalysis depends on residues Ser-210, His-237, and Asp-334.

It belongs to the CheB family. Phosphorylated by CheA. Phosphorylation of the N-terminal regulatory domain activates the methylesterase activity.

The protein localises to the cytoplasm. The catalysed reaction is [protein]-L-glutamate 5-O-methyl ester + H2O = L-glutamyl-[protein] + methanol + H(+). The enzyme catalyses L-glutaminyl-[protein] + H2O = L-glutamyl-[protein] + NH4(+). Functionally, involved in chemotaxis. Part of a chemotaxis signal transduction system that modulates chemotaxis in response to various stimuli. Catalyzes the demethylation of specific methylglutamate residues introduced into the chemoreceptors (methyl-accepting chemotaxis proteins or MCP) by CheR. Also mediates the irreversible deamidation of specific glutamine residues to glutamic acid. This is Protein-glutamate methylesterase/protein-glutamine glutaminase from Desulfitobacterium hafniense (strain Y51).